The primary structure comprises 88 residues: Potassium channel toxin MeuTXKbeta3-meucin-24 (88 aa).

The first 22 residues, 1-22 (MMKQQFFLFLAVIVMISSVIEA), serve as a signal peptide directing secretion. The BetaSPN-type CS-alpha/beta domain maps to 55 to 88 (EYACPVIEKWCEDHCQAKNAIGRCENTECKCLSK). Disulfide bonds link Cys58-Cys78, Cys65-Cys83, and Cys69-Cys85.

This sequence belongs to the long chain scorpion toxin family. Class 2 subfamily. Expressed by the venom gland.

It localises to the secreted. Inhibits voltage-gated potassium channels. In terms of biological role, the synthetic meucin-24 inhibits the development of P.berghei ookinetes, kills intraerythrocytic P.falciparum, and is cytotoxic to the Drosophila S2 cells at micromolar concentrations. No antibacterial, antifungal and hemolytic activities have been found at micromolar concentrations. This is Potassium channel toxin MeuTXKbeta3-meucin-24 from Mesobuthus eupeus (Lesser Asian scorpion).